Consider the following 388-residue polypeptide: Diacylglycerol O-acyltransferase 2 (388 aa).

Over 1–69 (MKTLIAAYSG…NRSKVEKHLQ (69 aa)) the chain is Cytoplasmic. A helical transmembrane segment spans residues 70 to 88 (VISVLQWVLSFLVLGVACS). The Lumenal portion of the chain corresponds to 89-92 (VILM). The chain crosses the membrane as a helical span at residues 93–112 (YTFCTDCWLIAALYFTWLAF). The Cytoplasmic segment spans residues 113–388 (DWNTPKKGGR…LPETEVLEVN (276 aa)).

This sequence belongs to the diacylglycerol acyltransferase family. Forms multimeric complexes consisting of several DGAT2 subunits. Interacts with SLC27A1 and this interaction is enhanced in the presence of ZFYVE1.

Its subcellular location is the endoplasmic reticulum membrane. The protein resides in the lipid droplet. It is found in the cytoplasm. The protein localises to the perinuclear region. It catalyses the reaction an acyl-CoA + a 1,2-diacyl-sn-glycerol = a triacyl-sn-glycerol + CoA. The catalysed reaction is all-trans-retinol + an acyl-CoA = an all-trans-retinyl ester + CoA. The enzyme catalyses 2-(9Z-octadecenoyl)-glycerol + (9Z)-octadecenoyl-CoA = 1,2-di-(9Z-octadecenoyl)-sn-glycerol + CoA. It carries out the reaction 1,2-di-(9Z-octadecenoyl)-sn-glycerol + (9Z)-octadecenoyl-CoA = 1,2,3-tri-(9Z-octadecenoyl)-glycerol + CoA. It catalyses the reaction all-trans-retinol + hexadecanoyl-CoA = all-trans-retinyl hexadecanoate + CoA. The catalysed reaction is 1-O-(9Z-octadecenyl)-glycerol + (9Z)-octadecenoyl-CoA = 1-O-(9Z-octadecyl)-3-(9Z-octadecenoyl)-glycerol + CoA. The enzyme catalyses 1-(9Z-octadecenoyl)-glycerol + (9Z)-octadecenoyl-CoA = 1,2-di-(9Z-octadecenoyl)-glycerol + CoA. It carries out the reaction 1,2-di-(9Z-octadecenoyl)-sn-glycerol + hexadecanoyl-CoA = 1,2-di-(9Z)-octadecenoyl-3-hexadecanoyl-sn-glycerol + CoA. It catalyses the reaction 1,3-di-(9Z-octadecenoyl)-glycerol + (9Z)-octadecenoyl-CoA = 1,2,3-tri-(9Z-octadecenoyl)-glycerol + CoA. The catalysed reaction is 2,3-di-(9Z)-octadecenoyl-sn-glycerol + (9Z)-octadecenoyl-CoA = 1,2,3-tri-(9Z-octadecenoyl)-glycerol + CoA. The enzyme catalyses 2-(9Z-octadecenoyl)-glycerol + hexadecanoyl-CoA = 1-hexadecanoyl-2-(9Z-octadecenoyl)-sn-glycerol + CoA. It participates in glycerolipid metabolism; triacylglycerol biosynthesis. With respect to regulation, inhibited by niacin. In terms of biological role, essential acyltransferase that catalyzes the terminal and only committed step in triacylglycerol synthesis by using diacylglycerol and fatty acyl CoA as substrates. Required for synthesis and storage of intracellular triglycerides. Probably plays a central role in cytosolic lipid accumulation. In liver, is primarily responsible for incorporating endogenously synthesized fatty acids into triglycerides. Also functions as an acyl-CoA retinol acyltransferase (ARAT). Also able to use 1-monoalkylglycerol (1-MAkG) as an acyl acceptor for the synthesis of monoalkyl-monoacylglycerol (MAMAG). The polypeptide is Diacylglycerol O-acyltransferase 2 (Rattus norvegicus (Rat)).